The sequence spans 162 residues: Large ribosomal subunit protein uL11 (162 aa).

The tract at residues 1 to 27 (MAGTIEVLVPGGEANPGPPLGPELGPT) is disordered.

Belongs to the universal ribosomal protein uL11 family. In terms of assembly, part of the 50S ribosomal subunit. Forms part of the ribosomal stalk which helps the ribosome interact with GTP-bound translation factors. Forms a heptameric L10(L12)2(L12)2(L12)2 complex, where L10 forms an elongated spine to which 3 L12 dimers bind in a sequential fashion.

Forms part of the ribosomal stalk which helps the ribosome interact with GTP-bound translation factors. In Haloarcula marismortui (strain ATCC 43049 / DSM 3752 / JCM 8966 / VKM B-1809) (Halobacterium marismortui), this protein is Large ribosomal subunit protein uL11.